The primary structure comprises 219 residues: Isovaleryl-homoserine lactone synthase (219 aa).

The protein belongs to the autoinducer synthase family.

The catalysed reaction is 3-methylbutanoyl-CoA + S-adenosyl-L-methionine = N-isovaleryl-L-homoserine lactone + S-methyl-5'-thioadenosine + CoA + H(+). Its function is as follows. Catalyzes the synthesis of IV-HSL (isovaleryl-homoserine lactone), a quorum-sensing (QS) autoinducer molecule which binds to BjaR1 transcriptional regulator to activate expression of QS-dependent genes. Is active with isovaleryl-CoA but cannot use isovaleryl-ACP as acyl donor. This Bradyrhizobium diazoefficiens (strain JCM 10833 / BCRC 13528 / IAM 13628 / NBRC 14792 / USDA 110) protein is Isovaleryl-homoserine lactone synthase (bjaI).